The primary structure comprises 181 residues: Ribonuclease M5 (181 aa).

Positions 5-88 (KEIIVVEGKD…IKHAYLNTKD (84 aa)) constitute a Toprim domain. Glu11, Asp57, and Asp59 together coordinate Mg(2+).

This sequence belongs to the ribonuclease M5 family. Mg(2+) serves as cofactor.

It localises to the cytoplasm. The catalysed reaction is Endonucleolytic cleavage of RNA, removing 21 and 42 nucleotides, respectively, from the 5'- and 3'-termini of a 5S-rRNA precursor.. Required for correct processing of both the 5' and 3' ends of 5S rRNA precursor. Cleaves both sides of a double-stranded region yielding mature 5S rRNA in one step. The sequence is that of Ribonuclease M5 from Borreliella burgdorferi (strain ATCC 35210 / DSM 4680 / CIP 102532 / B31) (Borrelia burgdorferi).